The primary structure comprises 153 residues: Neuromedin-S (153 aa).

The N-terminal stretch at 1 to 26 is a signal peptide; sequence MKHLRPQFPLILAIYCFCMLQIPSSG. Propeptides lie at residues 27-69, 70-105, and 106-108; these read FPQP…IYKR, FLFH…ANRR, and MKR. N141 is subject to Asparagine amide. Residues 144–153 constitute a propeptide that is removed on maturation; sequence NIEDEAQIQW.

Belongs to the NmU family.

The protein localises to the secreted. Its function is as follows. Implicated in the regulation of circadian rhythms through autocrine and/or paracrine actions. This Homo sapiens (Human) protein is Neuromedin-S (NMS).